Here is a 284-residue protein sequence, read N- to C-terminus: Bifunctional protein FolD (284 aa).

Residues 166–168 (GAS) and Ile232 each bind NADP(+).

This sequence belongs to the tetrahydrofolate dehydrogenase/cyclohydrolase family. In terms of assembly, homodimer.

The catalysed reaction is (6R)-5,10-methylene-5,6,7,8-tetrahydrofolate + NADP(+) = (6R)-5,10-methenyltetrahydrofolate + NADPH. It catalyses the reaction (6R)-5,10-methenyltetrahydrofolate + H2O = (6R)-10-formyltetrahydrofolate + H(+). It participates in one-carbon metabolism; tetrahydrofolate interconversion. In terms of biological role, catalyzes the oxidation of 5,10-methylenetetrahydrofolate to 5,10-methenyltetrahydrofolate and then the hydrolysis of 5,10-methenyltetrahydrofolate to 10-formyltetrahydrofolate. The protein is Bifunctional protein FolD of Shewanella baltica (strain OS195).